Here is a 39-residue protein sequence, read N- to C-terminus: uncharacterized protein (39 aa).

This is an uncharacterized protein from Saccharomyces cerevisiae (strain ATCC 204508 / S288c) (Baker's yeast).